The following is a 274-amino-acid chain: tRNA-cytidine(32) 2-sulfurtransferase (274 aa).

The PP-loop motif motif lies at 40-45 (SGGKDS). [4Fe-4S] cluster contacts are provided by Cys115, Cys118, and Cys206.

Belongs to the TtcA family. In terms of assembly, homodimer. The cofactor is Mg(2+). [4Fe-4S] cluster serves as cofactor.

The protein resides in the cytoplasm. It carries out the reaction cytidine(32) in tRNA + S-sulfanyl-L-cysteinyl-[cysteine desulfurase] + AH2 + ATP = 2-thiocytidine(32) in tRNA + L-cysteinyl-[cysteine desulfurase] + A + AMP + diphosphate + H(+). The protein operates within tRNA modification. Catalyzes the ATP-dependent 2-thiolation of cytidine in position 32 of tRNA, to form 2-thiocytidine (s(2)C32). The sulfur atoms are provided by the cysteine/cysteine desulfurase (IscS) system. This chain is tRNA-cytidine(32) 2-sulfurtransferase, found in Pseudomonas syringae pv. syringae (strain B728a).